Consider the following 127-residue polypeptide: Small ribosomal subunit protein eS8 (127 aa).

The protein belongs to the eukaryotic ribosomal protein eS8 family. In terms of assembly, part of the 30S ribosomal subunit.

This is Small ribosomal subunit protein eS8 (rps8e) from Pyrococcus abyssi (strain GE5 / Orsay).